The sequence spans 623 residues: MTGPIVYVQNADGIFFKLAEGKGTNDAVIHLANQDQGVRVLGAEEFPVQGEVVKIASLMGFIKLKLNRYAIIANTVEETGRFNGHVFYRVLQHSIVSTKFNSRIDSEEAEYIKLLELHLKNSTFYFSYTYDLTNSLQRNEKVGPAASWKTADERFFWNHYLTEDLRNFAHQDPRIDSFIQPVIYGYAKTVDAVLNATPIVLGLITRRSIFRAGTRYFRRGVDKDGNVGNFNETEQILLAENPESEKIHVFSFLQTRGSVPIYWAEINNLKYKPNLVLGENSLDATKKHFDQQKELYGDNYLVNLVNQKGHELPVKEGYESVVHALNDPKIHYVYFDFHHECRKMQWHRVKLLIDHLEKLGLSNEDFFHKVIDSNGNTVEIVNEQHSVVRTNCMDCLDRTNVVQSVLAQWVLQKEFESADVVATGSTWEDNAPLLTSYQNLWADNADAVSVAYSGTGALKTDFTRTGKRTRLGAFNDFLNSASRYYQNNWTDGPRQDSYDLFLGGFRPHTASIKSPFPDRRPVYIQLIPMIICAALTVLGATIFFPKDRFTSSKNLLYFAGASIVLALSTKFMFKNGIQFVNWPKLVDVGFLVVHQTHDKEQQFKGLKYAQSPKFSKPDPLKRD.

The Cytoplasmic segment spans residues 1-523 (MTGPIVYVQN…SPFPDRRPVY (523 aa)). Residues 115 to 454 (LELHLKNSTF…ADAVSVAYSG (340 aa)) enclose the SAC domain. Glycyl lysine isopeptide (Lys-Gly) (interchain with G-Cter in ubiquitin) cross-links involve residues lysine 246 and lysine 358. Residues 524–544 (IQLIPMIICAALTVLGATIFF) traverse the membrane as a helical segment. The Lumenal segment spans residues 545 to 552 (PKDRFTSS). The helical transmembrane segment at 553 to 573 (KNLLYFAGASIVLALSTKFMF) threads the bilayer. Over 574–623 (KNGIQFVNWPKLVDVGFLVVHQTHDKEQQFKGLKYAQSPKFSKPDPLKRD) the chain is Cytoplasmic.

As to quaternary structure, component of the SPOTS complex, at least composed of LCB1/2 (LCB1 and/or LCB2), ORM1/2 (ORM1 and/or ORM2), SAC1 and TSC3.

The protein localises to the endoplasmic reticulum membrane. It localises to the golgi apparatus membrane. The catalysed reaction is a 1,2-diacyl-sn-glycero-3-phospho-(1D-myo-inositol-3-phosphate) + H2O = a 1,2-diacyl-sn-glycero-3-phospho-(1D-myo-inositol) + phosphate. The enzyme catalyses a 1,2-diacyl-sn-glycero-3-phospho-(1D-myo-inositol 4-phosphate) + H2O = a 1,2-diacyl-sn-glycero-3-phospho-(1D-myo-inositol) + phosphate. Its function is as follows. Phosphoinositide phosphatase which catalyzes the hydrolysis of phosphatidylinositol 3-phosphate (PtdIns(3)P) and phosphatidylinositol 4-phosphate (PtdIns(4)P). Has low activity towards phosphatidylinositol-3,5-bisphosphate (PtdIns(3,5)P2). May be involved in the coordination of the activities of the secretory pathway and the actin cytoskeleton. This is Phosphatidylinositol-3-phosphatase SAC1 (SAC1) from Saccharomyces cerevisiae (strain ATCC 204508 / S288c) (Baker's yeast).